Here is a 500-residue protein sequence, read N- to C-terminus: Aspartyl/glutamyl-tRNA(Asn/Gln) amidotransferase subunit B (500 aa).

Belongs to the GatB/GatE family. GatB subfamily. Heterotrimer of A, B and C subunits.

It catalyses the reaction L-glutamyl-tRNA(Gln) + L-glutamine + ATP + H2O = L-glutaminyl-tRNA(Gln) + L-glutamate + ADP + phosphate + H(+). The enzyme catalyses L-aspartyl-tRNA(Asn) + L-glutamine + ATP + H2O = L-asparaginyl-tRNA(Asn) + L-glutamate + ADP + phosphate + 2 H(+). In terms of biological role, allows the formation of correctly charged Asn-tRNA(Asn) or Gln-tRNA(Gln) through the transamidation of misacylated Asp-tRNA(Asn) or Glu-tRNA(Gln) in organisms which lack either or both of asparaginyl-tRNA or glutaminyl-tRNA synthetases. The reaction takes place in the presence of glutamine and ATP through an activated phospho-Asp-tRNA(Asn) or phospho-Glu-tRNA(Gln). This chain is Aspartyl/glutamyl-tRNA(Asn/Gln) amidotransferase subunit B, found in Rhizobium leguminosarum bv. trifolii (strain WSM2304).